A 186-amino-acid chain; its full sequence is Peptidyl-tRNA hydrolase (186 aa).

Position 14 (tyrosine 14) interacts with tRNA. Histidine 19 acts as the Proton acceptor in catalysis. TRNA is bound by residues tyrosine 60 and asparagine 62.

It belongs to the PTH family. In terms of assembly, monomer.

The protein localises to the cytoplasm. It carries out the reaction an N-acyl-L-alpha-aminoacyl-tRNA + H2O = an N-acyl-L-amino acid + a tRNA + H(+). In terms of biological role, hydrolyzes ribosome-free peptidyl-tRNAs (with 1 or more amino acids incorporated), which drop off the ribosome during protein synthesis, or as a result of ribosome stalling. Catalyzes the release of premature peptidyl moieties from peptidyl-tRNA molecules trapped in stalled 50S ribosomal subunits, and thus maintains levels of free tRNAs and 50S ribosomes. The polypeptide is Peptidyl-tRNA hydrolase (Mycoplasmopsis pulmonis (strain UAB CTIP) (Mycoplasma pulmonis)).